Here is a 362-residue protein sequence, read N- to C-terminus: MTELLKTPIHPLYAKYGAKTIDFGGWDLPVQFAGIKAEHEAVRTDAGLFDVSHMGEILVKGPDSTSYLQYLLTNDIEKIKIGKAQYNIMCYETGGTVDDLVVYKKSETEYILVVNAANTDKDFEWMVKNIRGDVSVTNVSSEYGQLALQGPSAEKILAKLTDVDLSSISFFGFVEDADVAGVKTIISRSGYTGEDGFEIYMPSADAGKVFEAILAEGVAPIGLGARDTLRLEAVLALYGQELSKDITPLEAGLNFAVKLKKEADFIGKEALIKQKEAGLNRKLVGIELIERGIPRHDYPVFLNEEEIGIVTSGTQSPTLGTNIGLALIDTAYTEIGQEVEVGIRNKKIKAKIVPTPFYKRAK.

The protein belongs to the GcvT family. The glycine cleavage system is composed of four proteins: P, T, L and H.

The catalysed reaction is N(6)-[(R)-S(8)-aminomethyldihydrolipoyl]-L-lysyl-[protein] + (6S)-5,6,7,8-tetrahydrofolate = N(6)-[(R)-dihydrolipoyl]-L-lysyl-[protein] + (6R)-5,10-methylene-5,6,7,8-tetrahydrofolate + NH4(+). In terms of biological role, the glycine cleavage system catalyzes the degradation of glycine. This is Aminomethyltransferase from Listeria monocytogenes serotype 4b (strain F2365).